The sequence spans 306 residues: Protein FAM228A (306 aa).

The tract at residues 237 to 277 is disordered; the sequence is HASKLSQQNKGAEKKGLALGTRAQRPRSWAAADSPQGTPLV. The residue at position 270 (S270) is a Phosphoserine.

This sequence belongs to the FAM228 family.

The chain is Protein FAM228A (Fam228a) from Rattus norvegicus (Rat).